Consider the following 208-residue polypeptide: Probable GTP-binding protein EngB (208 aa).

One can recognise an EngB-type G domain in the interval 22 to 195 (GLPEIALAGR…WHSIEEIFIA (174 aa)). GTP contacts are provided by residues 30 to 37 (GRSNVGKS), 57 to 61 (GKTRT), 75 to 78 (DLPG), 142 to 145 (TKSD), and 174 to 176 (ISS). Mg(2+)-binding residues include Ser-37 and Thr-59.

The protein belongs to the TRAFAC class TrmE-Era-EngA-EngB-Septin-like GTPase superfamily. EngB GTPase family. The cofactor is Mg(2+).

Its function is as follows. Necessary for normal cell division and for the maintenance of normal septation. The protein is Probable GTP-binding protein EngB of Alkaliphilus oremlandii (strain OhILAs) (Clostridium oremlandii (strain OhILAs)).